The chain runs to 287 residues: Protease HtpX (287 aa).

The next 2 helical transmembrane spans lie at 4–24 (IFLL…VMSI) and 33–53 (GGLL…SLAI). Position 139 (His-139) interacts with Zn(2+). Glu-140 is a catalytic residue. His-143 provides a ligand contact to Zn(2+). 2 helical membrane-spanning segments follow: residues 154 to 174 (LIQG…AGII) and 195 to 215 (AVVF…VAYF). Zn(2+) is bound at residue Glu-220.

This sequence belongs to the peptidase M48B family. Zn(2+) is required as a cofactor.

Its subcellular location is the cell inner membrane. This Shewanella putrefaciens (strain CN-32 / ATCC BAA-453) protein is Protease HtpX.